Here is a 247-residue protein sequence, read N- to C-terminus: MLKQRFVLDTTALTDLQTREVMGYTSLCEGMKTILDLIAEARLHFGISCYVPYPSVYKEMYEFASRNGCDREVVAKIDTWLVKKSPDRYRVDVTSQIFHEYVSYMRERINRGMGVAEDAIWEAATECLFMENPQNKKKEYREEVEREVIGGIIGKFRNKYRAALRYGILDSAPDIDVLILAKELDAAVIASDYGIEKWAEQLGVRFVPANTFPMMIKEYLRHGPEVVKEQEDEDRKRIDYSDDADFI.

Belongs to the HARP family.

The enzyme catalyses Endonucleolytic cleavage of RNA, removing 5'-extranucleotides from tRNA precursor.. RNA-free RNase P that catalyzes the removal of the 5'-leader sequence from pre-tRNA to produce the mature 5'-terminus. The sequence is that of RNA-free ribonuclease P from Methanosarcina mazei (strain ATCC BAA-159 / DSM 3647 / Goe1 / Go1 / JCM 11833 / OCM 88) (Methanosarcina frisia).